A 172-amino-acid chain; its full sequence is Small ribosomal subunit protein uS5 (172 aa).

The 64-residue stretch at 11–74 folds into the S5 DRBM domain; that stretch reads LSEVLVDVNR…QAAKKRMMKV (64 aa).

It belongs to the universal ribosomal protein uS5 family. As to quaternary structure, part of the 30S ribosomal subunit. Contacts proteins S4 and S8.

Functionally, with S4 and S12 plays an important role in translational accuracy. Its function is as follows. Located at the back of the 30S subunit body where it stabilizes the conformation of the head with respect to the body. This Rickettsia canadensis (strain McKiel) protein is Small ribosomal subunit protein uS5.